Reading from the N-terminus, the 136-residue chain is Large ribosomal subunit protein uL16 (136 aa).

It belongs to the universal ribosomal protein uL16 family. In terms of assembly, part of the 50S ribosomal subunit.

Binds 23S rRNA and is also seen to make contacts with the A and possibly P site tRNAs. The protein is Large ribosomal subunit protein uL16 of Photobacterium profundum (strain SS9).